The sequence spans 777 residues: Biotin sulfoxide reductase (777 aa).

Ser148 is a Mo-bis(molybdopterin guanine dinucleotide) binding site.

Belongs to the prokaryotic molybdopterin-containing oxidoreductase family. Mo-bis(molybdopterin guanine dinucleotide) serves as cofactor.

It catalyses the reaction [thioredoxin]-disulfide + L-methionine + H2O = L-methionine (S)-S-oxide + [thioredoxin]-dithiol. This enzyme may serve as a scavenger, allowing the cell to utilize biotin sulfoxide as a biotin source. It reduces a spontaneous oxidation product of biotin, D-biotin D-sulfoxide (BSO or BDS), back to biotin. Also exhibits methionine-(S)-sulfoxide (Met-S-SO) reductase activity, acting specifically on the (S) enantiomer in the free, but not the protein-bound form. It thus plays a role in assimilation of oxidized methionines. The protein is Biotin sulfoxide reductase (bisC) of Escherichia coli (strain K12).